Consider the following 315-residue polypeptide: Isoaspartyl peptidase/L-asparaginase 1 (315 aa).

A Phosphoserine modification is found at Ser169. Thr183 acts as the Nucleophile in catalysis. Substrate contacts are provided by residues Arg211–Asp214 and Thr233–Gly236.

Belongs to the Ntn-hydrolase family. Heterotetramer of two alpha and two beta chains arranged as a dimer of alpha/beta heterodimers. Post-translationally, cleaved into an alpha and beta chain by autocatalysis; this activates the enzyme. The N-terminal residue of the beta subunit is responsible for the nucleophile hydrolase activity.

It catalyses the reaction Cleavage of a beta-linked Asp residue from the N-terminus of a polypeptide.. Acts in asparagine catabolism but also in the final steps of protein and degradation via hydrolysis of a range of isoaspartyl dipeptides. The affinity for Asn and at least 4 isoaspartyl dipeptides (L-beta-Asp-Ala, L-beta-Asp-Gly, L-beta-Asp-Leu, L-beta-Asp-Phe) is quite low, KM being greater than 4.0 mM. The enzyme is inactive on alpha-aspartyl dipeptides. The protein is Isoaspartyl peptidase/L-asparaginase 1 of Arabidopsis thaliana (Mouse-ear cress).